Here is a 119-residue protein sequence, read N- to C-terminus: NADH-quinone oxidoreductase subunit A (119 aa).

A run of 3 helical transmembrane segments spans residues 7-27 (FPVL…VSIG), 63-83 (LVAI…PWGV), and 88-108 (IGWP…LGFA).

Belongs to the complex I subunit 3 family. NDH-1 is composed of 14 different subunits. Subunits NuoA, H, J, K, L, M, N constitute the membrane sector of the complex.

It is found in the cell inner membrane. It carries out the reaction a quinone + NADH + 5 H(+)(in) = a quinol + NAD(+) + 4 H(+)(out). Functionally, NDH-1 shuttles electrons from NADH, via FMN and iron-sulfur (Fe-S) centers, to quinones in the respiratory chain. The immediate electron acceptor for the enzyme in this species is believed to be ubiquinone. Couples the redox reaction to proton translocation (for every two electrons transferred, four hydrogen ions are translocated across the cytoplasmic membrane), and thus conserves the redox energy in a proton gradient. The polypeptide is NADH-quinone oxidoreductase subunit A (Paraburkholderia xenovorans (strain LB400)).